The chain runs to 436 residues: tRNA-2-methylthio-N(6)-dimethylallyladenosine synthase (436 aa).

The region spanning 5-121 (RKLFIKTYGC…LPDMLERTEG (117 aa)) is the MTTase N-terminal domain. [4Fe-4S] cluster-binding residues include Cys14, Cys50, Cys84, Cys158, Cys162, and Cys165. The 231-residue stretch at 144–374 (ATRGPAAFLT…TEQQRAAQMA (231 aa)) folds into the Radical SAM core domain. Positions 373 to 435 (MAMVGREVGV…PNSLAGERLG (63 aa)) constitute a TRAM domain.

Belongs to the methylthiotransferase family. MiaB subfamily. In terms of assembly, monomer. The cofactor is [4Fe-4S] cluster.

The protein localises to the cytoplasm. The catalysed reaction is N(6)-dimethylallyladenosine(37) in tRNA + (sulfur carrier)-SH + AH2 + 2 S-adenosyl-L-methionine = 2-methylsulfanyl-N(6)-dimethylallyladenosine(37) in tRNA + (sulfur carrier)-H + 5'-deoxyadenosine + L-methionine + A + S-adenosyl-L-homocysteine + 2 H(+). Catalyzes the methylthiolation of N6-(dimethylallyl)adenosine (i(6)A), leading to the formation of 2-methylthio-N6-(dimethylallyl)adenosine (ms(2)i(6)A) at position 37 in tRNAs that read codons beginning with uridine. The polypeptide is tRNA-2-methylthio-N(6)-dimethylallyladenosine synthase (Cereibacter sphaeroides (strain ATCC 17023 / DSM 158 / JCM 6121 / CCUG 31486 / LMG 2827 / NBRC 12203 / NCIMB 8253 / ATH 2.4.1.) (Rhodobacter sphaeroides)).